The sequence spans 404 residues: MSYKIMAINAGSSSLKFQLLEMPQGDMLCQGLIERIGMADAQVTIKTHSQKWQETVPVADHRDAVTLLLEKLLGYQIINSLRDIDGVGHRVAHGGEFFKDSTLVTDETLAQIERLAELAPLHNPVNALGIHVFRQLLPDAPSVAVFDTAFHQTLDEPAYIYPLPWHYYAELGIRRYGFHGTSHKYVSGVLAEKLGVPLSALRVICCHLGNGSSICAIKNGRSVNTSMGFTPQSGVMMGTRSGDIDPSILPWIAQRESKTPQQLNQLLNNESGLLGVSGVSSDYRDVEQAANTGNRQAKLALTLFAERIRATIGSYIMQMGGLDALVFTGGIGENSARARSAVCHNLQFLGLAVDEEKNQRNATFIQTENALVKVAVINTNEELMIAQDVMRIALPATEGLCVPA.

It belongs to the acetokinase family. PduW subfamily.

Its subcellular location is the cytoplasm. The catalysed reaction is propanoate + ATP = propanoyl phosphate + ADP. Its pathway is polyol metabolism; 1,2-propanediol degradation. The protein operates within organic acid metabolism; propanoate degradation. Functionally, works with phosphate acetyltransferase (pta) to capture exogenous propionate and regenerate propionyl-CoA during degradation of propionate and 1,2-propanediol (1,2-PD). Ectopic expression partially complements a cobB deletion allowing some growth on propionate. Restores growth to an eutQ deletion on ethanolamine and tetrathionate under anoxic conditions. The polypeptide is Propionate kinase PduW (Salmonella typhimurium (strain LT2 / SGSC1412 / ATCC 700720)).